The sequence spans 172 residues: C-phycocyanin beta subunit (172 aa).

Residue N72 is modified to N4-methylasparagine. (2R,3E)-phycocyanobilin contacts are provided by C82 and C153.

Belongs to the phycobiliprotein family. As to quaternary structure, heterodimer of an alpha and a beta subunit, which further assembles into trimers and the trimers into hexamers. Post-translationally, contains two covalently linked bilin chromophores.

Its subcellular location is the cellular thylakoid membrane. Its function is as follows. Light-harvesting photosynthetic bile pigment-protein from the phycobiliprotein complex (phycobilisome, PBS). Phycocyanin is the major phycobiliprotein in the PBS rod. This is C-phycocyanin beta subunit (cpcB) from Synechocystis sp. (strain PCC 6701).